The chain runs to 117 residues: Large ribosomal subunit protein uL18 (117 aa).

It belongs to the universal ribosomal protein uL18 family. Part of the 50S ribosomal subunit; part of the 5S rRNA/L5/L18/L25 subcomplex. Contacts the 5S and 23S rRNAs.

This is one of the proteins that bind and probably mediate the attachment of the 5S RNA into the large ribosomal subunit, where it forms part of the central protuberance. The sequence is that of Large ribosomal subunit protein uL18 from Blochmanniella floridana.